A 177-amino-acid polypeptide reads, in one-letter code: MSRVANNPISIPKGVEVTIADGIVTAKGKNGLLSRTVPAELGVDLEGGTLSIRYNKNDQRQNALAGTTRANLANMIVGVSNGFERKLSLVGVGYRAQAKGDVLSLSLGFSHPVEFKVPAGVVVETPSQTDIVVKGADRQVVGQVAADIRAFRAPEPYKGKGVRYADEVIIRKEAKKK.

Belongs to the universal ribosomal protein uL6 family. In terms of assembly, part of the 50S ribosomal subunit.

Functionally, this protein binds to the 23S rRNA, and is important in its secondary structure. It is located near the subunit interface in the base of the L7/L12 stalk, and near the tRNA binding site of the peptidyltransferase center. The protein is Large ribosomal subunit protein uL6 of Methylococcus capsulatus (strain ATCC 33009 / NCIMB 11132 / Bath).